We begin with the raw amino-acid sequence, 63 residues long: Prokaryotic ubiquitin-like protein Pup 1 (63 aa).

Basic and acidic residues-rich tracts occupy residues 1 to 12 (MSQEKVQRHGGG) and 24 to 33 (GQERREKLGE). The segment at 1–35 (MSQEKVQRHGGGDGEEESGPEAAGQERREKLGEDV) is disordered. The segment at 20 to 57 (PEAAGQERREKLGEDVDAILDEIDDVLEENAEDFVRAY) is ARC ATPase binding. Residues 25 to 51 (QERREKLGEDVDAILDEIDDVLEENAE) adopt a coiled-coil conformation. Gln63 carries the deamidated glutamine modification. Gln63 is covalently cross-linked (Isoglutamyl lysine isopeptide (Gln-Lys) (interchain with K-? in acceptor proteins)).

This sequence belongs to the prokaryotic ubiquitin-like protein family. In terms of assembly, strongly interacts with the proteasome-associated ATPase ARC through a hydrophobic interface; the interacting region of Pup lies in its C-terminal half. There is one Pup binding site per ARC hexamer ring. Is modified by deamidation of its C-terminal glutamine to glutamate by the deamidase Dop, a prerequisite to the subsequent pupylation process.

It participates in protein degradation; proteasomal Pup-dependent pathway. Its function is as follows. Protein modifier that is covalently attached to lysine residues of substrate proteins, thereby targeting them for proteasomal degradation. The tagging system is termed pupylation. The chain is Prokaryotic ubiquitin-like protein Pup 1 from Saccharopolyspora erythraea (strain ATCC 11635 / DSM 40517 / JCM 4748 / NBRC 13426 / NCIMB 8594 / NRRL 2338).